We begin with the raw amino-acid sequence, 187 residues long: Large ribosomal subunit protein mL49 (187 aa).

This sequence belongs to the mitochondrion-specific ribosomal protein mL49 family.

The protein resides in the mitochondrion. The polypeptide is Large ribosomal subunit protein mL49 (mrpl-49) (Caenorhabditis elegans).